Here is a 323-residue protein sequence, read N- to C-terminus: Cell division protein ZipA (323 aa).

Over 1–4 the chain is Periplasmic; it reads MDLN. The chain crosses the membrane as a helical span at residues 5 to 25; it reads TILIILGIIALIILVVHGLWA. Residues 26 to 323 are Cytoplasmic-facing; sequence NRREKSQYFK…AEKAYLDKVR (298 aa). A disordered region spans residues 44–73; that stretch reads SRLREPPAHIQSASEEKKDANTSTPTAEVS.

The protein belongs to the ZipA family. As to quaternary structure, interacts with FtsZ via their C-terminal domains.

The protein resides in the cell inner membrane. Essential cell division protein that stabilizes the FtsZ protofilaments by cross-linking them and that serves as a cytoplasmic membrane anchor for the Z ring. Also required for the recruitment to the septal ring of downstream cell division proteins. The polypeptide is Cell division protein ZipA (Pasteurella multocida (strain Pm70)).